Here is a 167-residue protein sequence, read N- to C-terminus: MALGLEDKKAIVAEVSEAAKGALSAVAADSRGVTVAKMTALRQSAREAGVYMRVVRNTLLTRAVEGSDFECMKDVFVGPTLIAFSNEHPGAAARLFKEFAKGNDKFSIKGGAFQGEFIPAAQIDRLATLPTYEEAIAKLMATMKEASAGKLVRTLAALRDKKEAEAA.

This sequence belongs to the universal ribosomal protein uL10 family. As to quaternary structure, part of the ribosomal stalk of the 50S ribosomal subunit. The N-terminus interacts with L11 and the large rRNA to form the base of the stalk. The C-terminus forms an elongated spine to which L12 dimers bind in a sequential fashion forming a multimeric L10(L12)X complex.

Functionally, forms part of the ribosomal stalk, playing a central role in the interaction of the ribosome with GTP-bound translation factors. The polypeptide is Large ribosomal subunit protein uL10 (Tolumonas auensis (strain DSM 9187 / NBRC 110442 / TA 4)).